Consider the following 316-residue polypeptide: Oligopeptide transport system permease protein AppB (316 aa).

6 helical membrane-spanning segments follow: residues 10 to 30, 100 to 120, 138 to 158, 177 to 197, 240 to 260, and 290 to 310; these read LMSIPILLGITILSFVIMKAA, LLLMLVSTILALMISIPFGVL, FIGLAIPNFWFGLILIMVLSV, IFDRIHHLILPAFVLATADMA, LPVITIFGLMIPSFIGGSVVV, and VISAVLVVVGNLIADILYAIV. The ABC transmembrane type-1 domain maps to 96–303; the sequence is LPNTLLLMLV…VLVVVGNLIA (208 aa).

Belongs to the binding-protein-dependent transport system permease family. OppBC subfamily.

It is found in the cell membrane. Functionally, this protein is a component of an oligopeptide permease, a binding protein-dependent transport system. This APP system can completely substitute for the OPP system in both sporulation and genetic competence, though, unlike OPP, is incapable of transporting tripeptides. Probably responsible for the translocation of the substrate across the membrane. The protein is Oligopeptide transport system permease protein AppB (appB) of Bacillus subtilis (strain 168).